Consider the following 323-residue polypeptide: MADIDKLNIDSIIQRLLEVRGSKPGKNVQLQENEIRGLCLKSREIFLSQPILLELEAPLKICGDIHGQYYDLLRLFEYGGFPPESNYLFLGDYVDRGKQSLETICLLLAYKIKYPENFFLLRGNHECVSINRIYGFYDECKRRYNIKLWKTFTDCFNCLPIAAIVDEKIFCCHGGLSPDLQSMEQIRRIMRPTDVPDQGLLCDLLWSDPDKDVLGWGETDRGVSFTFGAEVVAKFLHKHDLDLICRAHQVVEDGYEFFAKRQLVTLFSAPNYCGEFDNAGAMMSVDETLMCSFQILKPAEKKKPNATRPVTPLRGMITKQAKK.

Ala2 bears the N-acetylalanine mark. Mn(2+)-binding residues include Asp64, His66, Asp92, and Asn124. His125 acts as the Proton donor in catalysis. Positions 173 and 248 each coordinate Mn(2+). A phosphothreonine mark is found at Thr307 and Thr311.

This sequence belongs to the PPP phosphatase family. PP-1 subfamily. PP1 comprises a catalytic subunit, PPP1CA, PPP1CB or PPP1CC, which is folded into its native form by inhibitor 2 and glycogen synthetase kinase 3, and then complexed to one or several targeting or regulatory subunits. PPP1R12A, PPP1R12B and PPP1R12C mediate binding to myosin. PPP1R3A (in skeletal muscle), PPP1R3B (in liver), PPP1R3C, PPP1R3D and PPP1R3F (in brain) mediate binding to glycogen. PPP1R15A and PPP1R15B mediate binding to EIF2S1. Part of a complex containing PPP1R15B, PP1 and NCK1/2. Interacts with PPP1R3B, PPP1R7 and CDCA2. Interacts with IKFZ1; the interaction targets PPP1CC to pericentromeric heterochromatin, dephosphorylates IKAROS, stabilizes it and prevents it from degradation. Interacts with NOM1 and PPP1R8. Component of the PTW/PP1 phosphatase complex, composed of PPP1R10/PNUTS, TOX4, WDR82, and PPP1CA or PPP1CB or PPP1CC. Interacts with PPP1R8. Interacts with NEK2. Interacts with PPP1R42; the interaction is direct. Interacts with URI1; the interaction is phosphorylation-dependent and occurs in a growth factor-dependent manner. Interacts with FOXP3. Interacts with TMEM225 (via RVxF motif). Interacts with MKI67. Interacts with RRP1B; this targets PPP1CC to the nucleolus. Interacts with DYNLT4. Interacts (via RVxF motif) with FIRRM; regulates PLK1 kinase activity. Interacts with the KNL1 complex subunit KNL1; the interaction is direct and mutually exclusive with KNL1 binding to microtubules. Component of the SHOC2-MRAS-PP1c (SMP) complex consisting of SHOC2, GTP-bound M-Ras/MRAS and the catalytic subunit of protein phosphatase 1 (either PPP1CA, PPP1CB or PPP1CC). SHOC2 and PP1c preferably bind M-Ras/MRAS, but they also bind K-Ras/KRAS, N-Ras/NRAS and H-Ras/HRAS; these interactions are GTP-dependent and both SHOC2 and PP1c are required to form a stable complex. Interacts with SHOC2 in the absence of Ras GTPases. Mn(2+) is required as a cofactor. Post-translationally, phosphorylated by NEK2.

It localises to the cytoplasm. The protein resides in the nucleus. The protein localises to the cleavage furrow. It is found in the nucleolus. Its subcellular location is the nucleoplasm. It localises to the chromosome. The protein resides in the centromere. The protein localises to the kinetochore. It is found in the nucleus speckle. Its subcellular location is the midbody. It localises to the mitochondrion. The protein resides in the cytoskeleton. The protein localises to the microtubule organizing center. It catalyses the reaction O-phospho-L-seryl-[protein] + H2O = L-seryl-[protein] + phosphate. It carries out the reaction O-phospho-L-threonyl-[protein] + H2O = L-threonyl-[protein] + phosphate. Its activity is regulated as follows. Inactivated by binding to URI1. Functionally, protein phosphatase that associates with over 200 regulatory proteins to form highly specific holoenzymes which dephosphorylate hundreds of biological targets. Protein phosphatase 1 (PP1) is essential for cell division, and participates in the regulation of glycogen metabolism, muscle contractility and protein synthesis. Dephosphorylates RPS6KB1. Involved in regulation of ionic conductances and long-term synaptic plasticity. May play an important role in dephosphorylating substrates such as the postsynaptic density-associated Ca(2+)/calmodulin dependent protein kinase II. Component of the PTW/PP1 phosphatase complex, which plays a role in the control of chromatin structure and cell cycle progression during the transition from mitosis into interphase. Regulates the recruitment of the SKA complex to kinetochores. Core component of the SHOC2-MRAS-PP1c (SMP) holophosphatase complex that regulates the MAPK pathway activation. Dephosphorylates MKI67 at the onset of anaphase. The SMP complex specifically dephosphorylates the inhibitory phosphorylation at 'Ser-259' of RAF1 kinase, 'Ser-365' of BRAF kinase and 'Ser-214' of ARAF kinase, stimulating their kinase activities. The SMP complex enhances the dephosphorylation activity and substrate specificity of PP1c. The sequence is that of Serine/threonine-protein phosphatase PP1-gamma catalytic subunit (PPP1CC) from Canis lupus familiaris (Dog).